A 504-amino-acid chain; its full sequence is Taurochenodeoxycholic 6 alpha-hydroxylase (504 aa).

2 helical membrane-spanning segments follow: residues 6–26 (LASV…LLLL) and 110–130 (APVL…LLNG). Cys451 is a heme binding site.

Belongs to the cytochrome P450 family. The cofactor is heme. Primarily expressed in liver. Low expression in kidney.

The protein resides in the endoplasmic reticulum membrane. The catalysed reaction is taurochenodeoxycholate + reduced [NADPH--hemoprotein reductase] + O2 = taurohyocholate + oxidized [NADPH--hemoprotein reductase] + H2O + H(+). The enzyme catalyses lithocholate + reduced [NADPH--hemoprotein reductase] + O2 = hyodeoxycholate + oxidized [NADPH--hemoprotein reductase] + H2O + H(+). In terms of biological role, catalyzes the 6 alpha hydroxylation oxidation of taurodeoxycholate to produce the pig specific bile acid taurohyocholic acid. This chain is Taurochenodeoxycholic 6 alpha-hydroxylase (CYP4A21), found in Sus scrofa (Pig).